Reading from the N-terminus, the 156-residue chain is Ribosomal RNA large subunit methyltransferase H (156 aa).

Residues Leu72, Gly104, and Leu123 to Phe128 contribute to the S-adenosyl-L-methionine site.

The protein belongs to the RNA methyltransferase RlmH family. As to quaternary structure, homodimer.

It localises to the cytoplasm. The catalysed reaction is pseudouridine(1915) in 23S rRNA + S-adenosyl-L-methionine = N(3)-methylpseudouridine(1915) in 23S rRNA + S-adenosyl-L-homocysteine + H(+). Its function is as follows. Specifically methylates the pseudouridine at position 1915 (m3Psi1915) in 23S rRNA. The sequence is that of Ribosomal RNA large subunit methyltransferase H from Nitratidesulfovibrio vulgaris (strain ATCC 29579 / DSM 644 / CCUG 34227 / NCIMB 8303 / VKM B-1760 / Hildenborough) (Desulfovibrio vulgaris).